The chain runs to 1377 residues: DNA-directed RNA polymerase subunit beta (1377 aa).

This sequence belongs to the RNA polymerase beta chain family. As to quaternary structure, the RNAP catalytic core consists of 2 alpha, 1 beta, 1 beta' and 1 omega subunit. When a sigma factor is associated with the core the holoenzyme is formed, which can initiate transcription.

The enzyme catalyses RNA(n) + a ribonucleoside 5'-triphosphate = RNA(n+1) + diphosphate. Functionally, DNA-dependent RNA polymerase catalyzes the transcription of DNA into RNA using the four ribonucleoside triphosphates as substrates. In Brucella melitensis biotype 2 (strain ATCC 23457), this protein is DNA-directed RNA polymerase subunit beta.